The sequence spans 245 residues: Probable transcriptional regulatory protein APH_0480 (245 aa).

The protein belongs to the TACO1 family.

It is found in the cytoplasm. The sequence is that of Probable transcriptional regulatory protein APH_0480 from Anaplasma phagocytophilum (strain HZ).